A 263-amino-acid polypeptide reads, in one-letter code: 3-methyl-2-oxobutanoate hydroxymethyltransferase (263 aa).

2 residues coordinate Mg(2+): aspartate 45 and aspartate 84. 3-methyl-2-oxobutanoate contacts are provided by residues 45 to 46 (DS), aspartate 84, and lysine 112. Residue glutamate 114 participates in Mg(2+) binding. Residue glutamate 180 is the Proton acceptor of the active site.

The protein belongs to the PanB family. Homodecamer; pentamer of dimers. Requires Mg(2+) as cofactor.

The protein localises to the cytoplasm. It catalyses the reaction 3-methyl-2-oxobutanoate + (6R)-5,10-methylene-5,6,7,8-tetrahydrofolate + H2O = 2-dehydropantoate + (6S)-5,6,7,8-tetrahydrofolate. It participates in cofactor biosynthesis; (R)-pantothenate biosynthesis; (R)-pantoate from 3-methyl-2-oxobutanoate: step 1/2. Functionally, catalyzes the reversible reaction in which hydroxymethyl group from 5,10-methylenetetrahydrofolate is transferred onto alpha-ketoisovalerate to form ketopantoate. This Salmonella enteritidis PT4 (strain P125109) protein is 3-methyl-2-oxobutanoate hydroxymethyltransferase.